The chain runs to 221 residues: Oxaloacetate tautomerase FAHD1, mitochondrial (221 aa).

A mitochondrion-targeting transit peptide spans 1 to 24 (MAASRPLSRFWEWGKNIVCVGRNY). A Phosphoserine modification is found at Ser-37. 3 residues coordinate Mg(2+): Glu-68, Glu-70, and Asp-99. Lys-110 bears the N6-acetyllysine mark. Lys-112 bears the N6-succinyllysine mark.

It belongs to the FAH family. In terms of assembly, homodimer. Mg(2+) serves as cofactor. It depends on Mn(2+) as a cofactor.

The protein localises to the mitochondrion. It is found in the cytoplasm. It localises to the cytosol. It carries out the reaction oxaloacetate = enol-oxaloacetate. It catalyses the reaction oxaloacetate + H(+) = pyruvate + CO2. The enzyme catalyses a 3-acylpyruvate + H2O = a carboxylate + pyruvate + H(+). The catalysed reaction is acetylpyruvate + H2O = acetate + pyruvate + H(+). It carries out the reaction 3-fumarylpyruvate + H2O = fumarate + pyruvate + H(+). Its activity is regulated as follows. Oxaloacetate decarboxylation is competitively inhibited by oxalate. Tautomerase that converts enol-oxaloacetate, a strong inhibitor of succinate dehydrogenase, to the physiological keto form of oxaloacetate. It is thereby required to maximize aerobic respiration efficiency by preventing succinate dehydrogenase inhibition. Also acts as a weak oxaloacetate decarboxylase (ODx), catalyzing the decarboxylation of oxaloacetate (OAA) to pyruvate and CO(2), and as such is likely a regulatory enzyme in the TCA cycle. Also displays acylpyruvase activity, being able to hydrolyze acetylpyruvate and fumarylpyruvate in vitro. The sequence is that of Oxaloacetate tautomerase FAHD1, mitochondrial from Bos taurus (Bovine).